The chain runs to 426 residues: Glutamate-1-semialdehyde 2,1-aminomutase (426 aa).

Position 265 is an N6-(pyridoxal phosphate)lysine (K265).

It belongs to the class-III pyridoxal-phosphate-dependent aminotransferase family. HemL subfamily. In terms of assembly, homodimer. Pyridoxal 5'-phosphate serves as cofactor.

Its subcellular location is the cytoplasm. It carries out the reaction (S)-4-amino-5-oxopentanoate = 5-aminolevulinate. Its pathway is porphyrin-containing compound metabolism; protoporphyrin-IX biosynthesis; 5-aminolevulinate from L-glutamyl-tRNA(Glu): step 2/2. This Actinobacillus pleuropneumoniae serotype 5b (strain L20) protein is Glutamate-1-semialdehyde 2,1-aminomutase.